The following is an 85-amino-acid chain: U1-theraphotoxin-Hs1a (85 aa).

The first 22 residues, 1-22, serve as a signal peptide directing secretion; sequence MKVTLIAILTCAAVLVLHTTAA. Residues 23 to 48 constitute a propeptide that is removed on maturation; that stretch reads EELEAESQLMEVGMPDTELAAVDEER. 3 disulfides stabilise this stretch: Cys52/Cys66, Cys56/Cys77, and Cys71/Cys82.

As to quaternary structure, heterodimer composed of the two variants Ile-58 and Gln-58. As to expression, expressed by the venom gland.

The protein localises to the secreted. Its function is as follows. Lethal neurotoxin that blocks neuromuscular transmission. Acts cooperatively to potentiate the activity of huwentoxin-I. This toxin is active against insects. This is U1-theraphotoxin-Hs1a from Cyriopagopus schmidti (Chinese bird spider).